Reading from the N-terminus, the 285-residue chain is Neuralized-like protein 2 (285 aa).

Positions 1 to 20 (MAAASEPVDSGALWGLERPE) are disordered. Residues 23–244 (PTRFHRVHGA…STKSVRLVQL (222 aa)) form the NHR domain. The SOCS box domain occupies 250-285 (SLQTLCRLVIQRSMVHRLAIDGLHLPKELKDFCKYE).

In terms of assembly, probable component the ECS(NEURL2) E3 ubiquitin-protein ligase complex consisting of ELOB/Elongin B, ELOC/Elongin C, CUL5, RBX1 and NEURL2. Interacts with CTNNB1. Expressed specifically in skeletal and cardiac muscles.

The protein localises to the cytoplasm. Its pathway is protein modification; protein ubiquitination. Plays an important role in the process of myofiber differentiation and maturation. Probable substrate-recognition component of a SCF-like ECS (Elongin BC-CUL2/5-SOCS-box protein) E3 ubiquitin-protein ligase complex, which mediates the ubiquitination of proteins. Probably contributes to catalysis through recognition and positioning of the substrate and the ubiquitin-conjugating enzyme. During myogenesis, controls the ubiquitination and degradation of the specific pool of CTNNB1/beta-catenin located at the sarcolemma. The protein is Neuralized-like protein 2 (NEURL2) of Homo sapiens (Human).